Here is a 122-residue protein sequence, read N- to C-terminus: Immunoglobulin lambda variable 4-3 (122 aa).

The signal sequence occupies residues 1-19 (MAWVSFYLLPFIFSTGLCA). Residues 20-44 (LPVLTQPPSASALLGASIKLTCTLS) are framework-1. Residues 21–122 (PVLTQPPSAS…ESHTIDGQVG (102 aa)) enclose the Ig-like domain. An intrachain disulfide couples cysteine 41 to cysteine 111. The tract at residues 45-51 (SEHSTYT) is complementarity-determining-1. The interval 52 to 68 (IEWYQQRPGRSPQYIMK) is framework-2. The complementarity-determining-2 stretch occupies residues 69–75 (VKSDGSH). The segment at 76–111 (SKGDGIPDRFMGSSSGADRYLTFSNLQSDDEAEYHC) is framework-3. The complementarity-determining-3 stretch occupies residues 112–122 (GESHTIDGQVG).

Immunoglobulins are composed of two identical heavy chains and two identical light chains; disulfide-linked.

It is found in the secreted. The protein resides in the cell membrane. Its function is as follows. V region of the variable domain of immunoglobulin light chains that participates in the antigen recognition. Immunoglobulins, also known as antibodies, are membrane-bound or secreted glycoproteins produced by B lymphocytes. In the recognition phase of humoral immunity, the membrane-bound immunoglobulins serve as receptors which, upon binding of a specific antigen, trigger the clonal expansion and differentiation of B lymphocytes into immunoglobulins-secreting plasma cells. Secreted immunoglobulins mediate the effector phase of humoral immunity, which results in the elimination of bound antigens. The antigen binding site is formed by the variable domain of one heavy chain, together with that of its associated light chain. Thus, each immunoglobulin has two antigen binding sites with remarkable affinity for a particular antigen. The variable domains are assembled by a process called V-(D)-J rearrangement and can then be subjected to somatic hypermutations which, after exposure to antigen and selection, allow affinity maturation for a particular antigen. This Homo sapiens (Human) protein is Immunoglobulin lambda variable 4-3.